The primary structure comprises 280 residues: Diaminopimelate epimerase (280 aa).

Positions 13 and 66 each coordinate substrate. Catalysis depends on Cys-75, which acts as the Proton donor. Residues 76–77 (GN), Asn-162, Asn-195, and 213–214 (ER) contribute to the substrate site. Residue Cys-222 is the Proton acceptor of the active site. Residue 223-224 (GT) participates in substrate binding.

It belongs to the diaminopimelate epimerase family. As to quaternary structure, homodimer.

Its subcellular location is the cytoplasm. It catalyses the reaction (2S,6S)-2,6-diaminopimelate = meso-2,6-diaminopimelate. It functions in the pathway amino-acid biosynthesis; L-lysine biosynthesis via DAP pathway; DL-2,6-diaminopimelate from LL-2,6-diaminopimelate: step 1/1. Functionally, catalyzes the stereoinversion of LL-2,6-diaminopimelate (L,L-DAP) to meso-diaminopimelate (meso-DAP), a precursor of L-lysine and an essential component of the bacterial peptidoglycan. The protein is Diaminopimelate epimerase of Synechococcus elongatus (strain ATCC 33912 / PCC 7942 / FACHB-805) (Anacystis nidulans R2).